The sequence spans 330 residues: MIKAAVVGASGYIGGELVRLLAMHPEVEITAITSRQYAGKKVHKVHPNLRGLDLRFTNDYNFDADVIFLAVPHGTSMKIIEEFLGSAKIIDMSADFRIKKELYEKYYGPHEKPELIDRFTYGLPELHRKEIKKAELVANPGCNATATILGLYPFKDLTQEAIVDLKVSSSAGGRRENIASIHPERSNVVRVYKPYHHRHEAEVLQETRVKAMFTVHSVDLVRGLLATIYFRYEGNERELLRKLLMYKDEPFVRIVTDKGGLQRYPDPKYVIGSNFIDIGFAYDSENSRVMVFSAIDNLIKGGAGQAVQNMNIMFGLKETTGLEYYPVYPV.

10 to 13 is a binding site for NADP(+); sequence SGYI. Cys142 is a catalytic residue. Position 297 (Asn297) interacts with NADP(+).

Belongs to the NAGSA dehydrogenase family. Type 1 subfamily. LysY sub-subfamily.

Its subcellular location is the cytoplasm. The catalysed reaction is [amino-group carrier protein]-C-terminal-N-(1-carboxy-5-oxopentan-1-yl)-L-glutamine + phosphate + NADP(+) = [amino-group carrier protein]-C-terminal-N-(1-carboxy-5-phosphooxy-5-oxopentan-1-yl)-L-glutamine + NADPH + H(+). It catalyses the reaction [amino-group carrier protein]-C-terminal-gamma-(L-glutamyl-5-semialdehyde)-L-glutamate + phosphate + NADP(+) = [amino-group carrier protein]-C-terminal-gamma-(5-phospho-L-glutamyl)-L-glutamate + NADPH + H(+). It participates in amino-acid biosynthesis; L-lysine biosynthesis via AAA pathway; L-lysine from L-alpha-aminoadipate (Thermus route): step 3/5. Its pathway is amino-acid biosynthesis; L-arginine biosynthesis. Its function is as follows. Involved in both the arginine and lysine biosynthetic pathways. In Pyrococcus furiosus (strain ATCC 43587 / DSM 3638 / JCM 8422 / Vc1), this protein is Putative [LysW]-L-2-aminoadipate/[LysW]-L-glutamate phosphate reductase.